The following is a 430-amino-acid chain: Trigger factor (430 aa).

One can recognise a PPIase FKBP-type domain in the interval 165 to 250; that stretch reads TDIAIFDFEG…LHQIKTKKIP (86 aa).

This sequence belongs to the FKBP-type PPIase family. Tig subfamily.

It localises to the cytoplasm. The enzyme catalyses [protein]-peptidylproline (omega=180) = [protein]-peptidylproline (omega=0). In terms of biological role, involved in protein export. Acts as a chaperone by maintaining the newly synthesized protein in an open conformation. Functions as a peptidyl-prolyl cis-trans isomerase. This chain is Trigger factor, found in Onion yellows phytoplasma (strain OY-M).